Reading from the N-terminus, the 403-residue chain is S-adenosylmethionine synthase (403 aa).

H14 contacts ATP. Position 16 (D16) interacts with Mg(2+). K(+) is bound at residue E42. L-methionine is bound by residues E55 and Q99. The interval 99–109 (QSPEIAEGVDH) is flexible loop. Residues 180–182 (DAK), 250–251 (RF), D259, 265–266 (RK), A282, and K286 each bind ATP. An L-methionine-binding site is contributed by D259. K290 provides a ligand contact to L-methionine.

This sequence belongs to the AdoMet synthase family. In terms of assembly, homotetramer; dimer of dimers. Requires Mg(2+) as cofactor. It depends on K(+) as a cofactor.

The protein resides in the cytoplasm. The catalysed reaction is L-methionine + ATP + H2O = S-adenosyl-L-methionine + phosphate + diphosphate. It functions in the pathway amino-acid biosynthesis; S-adenosyl-L-methionine biosynthesis; S-adenosyl-L-methionine from L-methionine: step 1/1. In terms of biological role, catalyzes the formation of S-adenosylmethionine (AdoMet) from methionine and ATP. The overall synthetic reaction is composed of two sequential steps, AdoMet formation and the subsequent tripolyphosphate hydrolysis which occurs prior to release of AdoMet from the enzyme. The polypeptide is S-adenosylmethionine synthase (Deinococcus deserti (strain DSM 17065 / CIP 109153 / LMG 22923 / VCD115)).